We begin with the raw amino-acid sequence, 155 residues long: 6,7-dimethyl-8-ribityllumazine synthase (155 aa).

Residues phenylalanine 24, alanine 58 to glutamate 60, and alanine 82 to isoleucine 84 contribute to the 5-amino-6-(D-ribitylamino)uracil site. Serine 87–threonine 88 serves as a coordination point for (2S)-2-hydroxy-3-oxobutyl phosphate. Residue histidine 90 is the Proton donor of the active site. Phenylalanine 115 contacts 5-amino-6-(D-ribitylamino)uracil. Arginine 129 contributes to the (2S)-2-hydroxy-3-oxobutyl phosphate binding site.

The protein belongs to the DMRL synthase family.

It catalyses the reaction (2S)-2-hydroxy-3-oxobutyl phosphate + 5-amino-6-(D-ribitylamino)uracil = 6,7-dimethyl-8-(1-D-ribityl)lumazine + phosphate + 2 H2O + H(+). It participates in cofactor biosynthesis; riboflavin biosynthesis; riboflavin from 2-hydroxy-3-oxobutyl phosphate and 5-amino-6-(D-ribitylamino)uracil: step 1/2. Functionally, catalyzes the formation of 6,7-dimethyl-8-ribityllumazine by condensation of 5-amino-6-(D-ribitylamino)uracil with 3,4-dihydroxy-2-butanone 4-phosphate. This is the penultimate step in the biosynthesis of riboflavin. In Chlorobium luteolum (strain DSM 273 / BCRC 81028 / 2530) (Pelodictyon luteolum), this protein is 6,7-dimethyl-8-ribityllumazine synthase.